A 447-amino-acid polypeptide reads, in one-letter code: UMP-CMP kinase 2, mitochondrial (447 aa).

Residues 1-73 constitute a mitochondrion transit peptide; it reads MALISRPRAP…ELLGPPGRSY (73 aa). Residue 259 to 266 participates in ATP binding; it reads GLDATGKT. The stretch at 380–412 forms a coiled coil; it reads EERVRRLQGRGQEKTKEEAELEANNVFRQKVEM.

This sequence belongs to the thymidylate kinase family. Strongly expressed in the brain.

The protein resides in the mitochondrion. It carries out the reaction CMP + ATP = CDP + ADP. The enzyme catalyses dCMP + ATP = dCDP + ADP. It catalyses the reaction a 2'-deoxyribonucleoside 5'-diphosphate + ATP = a 2'-deoxyribonucleoside 5'-triphosphate + ADP. The catalysed reaction is a ribonucleoside 5'-diphosphate + ATP = a ribonucleoside 5'-triphosphate + ADP. Functionally, mitochondrial nucleotide monophosphate kinase needed for salvage dNTP synthesis that mediates immunomodulatory and antiviral activities through IFN-dependent and IFN-independent pathways. Restricts the replication of multiple viruses including flaviviruses or coronaviruses. Together with viperin/RSAD2 and ddhCTP, suppresses the replication of several coronaviruses through inhibition of the viral RNA-dependent RNA polymerase activities. Concerning flaviviruses, restricts RNA translation when localized to the mitochondria independently of its kinase activity. Is able to phosphorylate dUMP, dCMP, CMP, UMP and monophosphates of the pyrimidine nucleoside analogs ddC, dFdC, araC, BVDU and FdUrd with ATP as phosphate donor. Efficacy is highest for dUMP followed by dCMP while CMP and UMP are poor substrates. Controls therefore mitochondrial DNA synthesis by supplying required deoxyribonucleotides. CMPK2-dependent mitochondrial DNA synthesis is necessary for the production of oxidized mitochondrial DNA fragments after exposure to NLRP3 activators. In turn, cytosolic oxidized mtDNA associates with the NLRP3 inflammasome complex and is required for its activation. This is UMP-CMP kinase 2, mitochondrial (Cmpk2) from Mus musculus (Mouse).